The chain runs to 238 residues: Adapter protein MecA (238 aa).

A compositionally biased stretch (basic and acidic residues) spans 120-136 (QQQKDNKQNQDQNERNR). The tract at residues 120-139 (QQQKDNKQNQDQNERNRQNT) is disordered.

The protein belongs to the MecA family. In terms of assembly, homodimer.

Functionally, enables the recognition and targeting of unfolded and aggregated proteins to the ClpC protease or to other proteins involved in proteolysis. This Staphylococcus saprophyticus subsp. saprophyticus (strain ATCC 15305 / DSM 20229 / NCIMB 8711 / NCTC 7292 / S-41) protein is Adapter protein MecA.